The sequence spans 982 residues: Cell division cycle-associated protein 2 (982 aa).

Polar residues predominate over residues 75 to 87; it reads VKTSSGKSTSSLQ. The segment at 75 to 97 is disordered; sequence VKTSSGKSTSSLQKARRRSTVGV. Phosphoserine is present on residues Ser-100, Ser-122, and Ser-133. 2 disordered regions span residues 192–216 and 274–315; these read SGFP…NYLS and TPLS…CGSS. 2 stretches are compositionally biased toward polar residues: residues 207-216 and 275-315; these read SQDSPDNYLS and PLSS…CGSS. Phosphoserine is present on residues Ser-286, Ser-296, and Ser-306. Residue Thr-309 is modified to Phosphothreonine. One can recognise a PP1-binding domain in the interval 379–436; the sequence is KRKRVTFGEDLSPEVFDESLPANTPLCKGGTPVRPRTVKTTSPLQSPVHEQFLQPNFD. Phosphoserine occurs at positions 390 and 397. Disordered stretches follow at residues 400-473, 489-545, 568-638, and 651-716; these read ANTP…NTCS, TRTS…KSYR, KPLL…QSQV, and ASER…PQSQ. Position 402 is a phosphothreonine (Thr-402). Phosphoserine is present on Ser-424. Polar residues-rich tracts occupy residues 451–473 and 498–512; these read SFAN…NTCS and TLSS…TTQA. Positions 518–545 are enriched in basic residues; it reads KMSRRKSREKKHTSAALPKKKQVLKSYR. Residues Ser-572 and Ser-595 each carry the phosphoserine modification. The span at 651–668 shows a compositional bias: polar residues; sequence ASERGPNASTRDTGSEGN. Residues 669 to 685 are compositionally biased toward basic and acidic residues; it reads TRAESKCQSAKEPKPGT. Position 735 is a phosphoserine (Ser-735). A Glycyl lysine isopeptide (Lys-Gly) (interchain with G-Cter in SUMO2) cross-link involves residue Lys-741. Residues 910–982 form a disordered region; sequence ECPSSKEETI…SLKGESAQLP (73 aa). A Phosphoserine modification is found at Ser-913. Low complexity predominate over residues 931-942; it reads VSGSESQGVGSS. Ser-950 carries the phosphoserine modification. Over residues 952–964 the composition is skewed to polar residues; sequence CGSTLTDANSATQ. A Phosphoserine modification is found at Ser-973.

Interacts with PPP1CC. Post-translationally, phosphorylated by CDK1. May regulate its subcellular location.

It localises to the nucleus. Regulator of chromosome structure during mitosis required for condensin-depleted chromosomes to retain their compact architecture through anaphase. Acts by mediating the recruitment of phopsphatase PP1-gamma subunit (PPP1CC) to chromatin at anaphase and into the following interphase. At anaphase onset, its association with chromatin targets a pool of PPP1CC to dephosphorylate substrates. The protein is Cell division cycle-associated protein 2 (Cdca2) of Mus musculus (Mouse).